Reading from the N-terminus, the 277-residue chain is Thiazole synthase (277 aa).

Lys116 acts as the Schiff-base intermediate with DXP in catalysis. Residues Gly177, 203-204 (AG), and 225-226 (NT) contribute to the 1-deoxy-D-xylulose 5-phosphate site.

This sequence belongs to the ThiG family. Homotetramer. Forms heterodimers with either ThiH or ThiS.

The protein localises to the cytoplasm. The enzyme catalyses [ThiS sulfur-carrier protein]-C-terminal-Gly-aminoethanethioate + 2-iminoacetate + 1-deoxy-D-xylulose 5-phosphate = [ThiS sulfur-carrier protein]-C-terminal Gly-Gly + 2-[(2R,5Z)-2-carboxy-4-methylthiazol-5(2H)-ylidene]ethyl phosphate + 2 H2O + H(+). It functions in the pathway cofactor biosynthesis; thiamine diphosphate biosynthesis. Its function is as follows. Catalyzes the rearrangement of 1-deoxy-D-xylulose 5-phosphate (DXP) to produce the thiazole phosphate moiety of thiamine. Sulfur is provided by the thiocarboxylate moiety of the carrier protein ThiS. In vitro, sulfur can be provided by H(2)S. The protein is Thiazole synthase of Thermosynechococcus vestitus (strain NIES-2133 / IAM M-273 / BP-1).